Here is a 325-residue protein sequence, read N- to C-terminus: Cytochrome f (325 aa).

The first 40 residues, methionine 1–alanine 40, serve as a signal peptide directing secretion. 4 residues coordinate heme: tyrosine 41, cysteine 62, cysteine 65, and histidine 66. The chain crosses the membrane as a helical span at residues isoleucine 290–leucine 309.

Belongs to the cytochrome f family. In terms of assembly, the 4 large subunits of the cytochrome b6-f complex are cytochrome b6, subunit IV (17 kDa polypeptide, PetD), cytochrome f and the Rieske protein, while the 4 small subunits are PetG, PetL, PetM and PetN. The complex functions as a dimer. Requires heme as cofactor.

The protein resides in the cellular thylakoid membrane. Its function is as follows. Component of the cytochrome b6-f complex, which mediates electron transfer between photosystem II (PSII) and photosystem I (PSI), cyclic electron flow around PSI, and state transitions. The chain is Cytochrome f (petA) from Picosynechococcus sp. (strain ATCC 27264 / PCC 7002 / PR-6) (Agmenellum quadruplicatum).